A 134-amino-acid chain; its full sequence is MGRDTVAEIITSIRNADMDKKRVVRITSTNITENIVKILLREGFIENARKHRENNKYFLVLTLRHRRNRKGPHRNIFNLKRISRPGLRIYANSQRIPRILGGMGIVIFSTSRGIMTDREARLEGIGGEILCYIW.

It belongs to the universal ribosomal protein uS8 family. Part of the 30S ribosomal subunit.

The protein localises to the plastid. Its subcellular location is the chloroplast. In terms of biological role, one of the primary rRNA binding proteins, it binds directly to 16S rRNA central domain where it helps coordinate assembly of the platform of the 30S subunit. This Coffea arabica (Arabian coffee) protein is Small ribosomal subunit protein uS8c (rps8).